The sequence spans 437 residues: Transcription factor AP-2-alpha (437 aa).

K10 is covalently cross-linked (Glycyl lysine isopeptide (Lys-Gly) (interchain with G-Cter in SUMO); alternate). A Glycyl lysine isopeptide (Lys-Gly) (interchain with G-Cter in SUMO2); alternate cross-link involves residue K10. The segment at 14–107 (CEDRHDGTSN…GQRQSQESGL (94 aa)) is disordered. A PPxY motif motif is present at residues 57-62 (YFPPPY). Low complexity-rich tracts occupy residues 65 to 74 (IYPQSQDPYS) and 88 to 101 (QPQP…GQRQ). Residues K177 and K184 each participate in a glycyl lysine isopeptide (Lys-Gly) (interchain with G-Cter in SUMO2) cross-link. The residue at position 239 (S239) is a Phosphoserine; by PKA. The tract at residues 280–410 (RRKAANVTLL…YLTEALKAMD (131 aa)) is H-S-H (helix-span-helix), dimerization. Residues 414-427 (LSNNPNSHTDNNAK) show a composition bias toward polar residues. A disordered region spans residues 414 to 437 (LSNNPNSHTDNNAKSSDKEEKHRK). Residues 428 to 437 (SSDKEEKHRK) are compositionally biased toward basic and acidic residues.

Belongs to the AP-2 family. In terms of assembly, binds DNA as a dimer. Can form homodimers or heterodimers with other AP-2 family members. Interacts with WWOX. Interacts with CITED4. Interacts with UBE2I. Interacts with RALBP1 in a complex also containing EPN1 and NUMB during interphase and mitosis. Interacts with KCTD1; this interaction represses transcription activation. Interacts (via C-terminus) with CITED2 (via C-terminus); the interaction stimulates TFAP2A-transcriptional activation. Interacts (via N-terminus) with EP300 (via N-terminus); the interaction requires CITED2. Interacts with KCTD15; this interaction inhibits TFAP2A transcriptional activation. Post-translationally, sumoylated on Lys-10; which inhibits transcriptional activity.

It is found in the nucleus. In terms of biological role, sequence-specific DNA-binding protein that interacts with inducible viral and cellular enhancer elements to regulate transcription of selected genes. AP-2 factors bind to the consensus sequence 5'-GCCNNNGGC-3' and activate genes involved in a large spectrum of important biological functions including proper eye, face, body wall, limb and neural tube development. They also suppress a number of genes including MCAM/MUC18, C/EBP alpha and MYC. AP-2-alpha is the only AP-2 protein required for early morphogenesis of the lens vesicle. Together with the CITED2 coactivator, stimulates the PITX2 P1 promoter transcription activation. Associates with chromatin to the PITX2 P1 promoter region. The chain is Transcription factor AP-2-alpha (TFAP2A) from Homo sapiens (Human).